The following is a 102-amino-acid chain: Integration host factor subunit alpha (102 aa).

It belongs to the bacterial histone-like protein family. As to quaternary structure, heterodimer of an alpha and a beta chain.

Its function is as follows. This protein is one of the two subunits of integration host factor, a specific DNA-binding protein that functions in genetic recombination as well as in transcriptional and translational control. The chain is Integration host factor subunit alpha from Albidiferax ferrireducens (strain ATCC BAA-621 / DSM 15236 / T118) (Rhodoferax ferrireducens).